The primary structure comprises 153 residues: Small ribosomal subunit protein bS16 (153 aa).

The disordered stretch occupies residues 114–153 (ENEPVGEAITPKKKKAKAEDAEAAADAPAEAAAESEAADK). Over residues 137 to 153 (AADAPAEAAAESEAADK) the composition is skewed to low complexity.

The protein belongs to the bacterial ribosomal protein bS16 family.

The chain is Small ribosomal subunit protein bS16 from Rhodococcus opacus (strain B4).